The chain runs to 92 residues: Small ribosomal subunit protein uS19 (92 aa).

The protein belongs to the universal ribosomal protein uS19 family.

In terms of biological role, protein S19 forms a complex with S13 that binds strongly to the 16S ribosomal RNA. This chain is Small ribosomal subunit protein uS19, found in Rhodospirillum centenum (strain ATCC 51521 / SW).